The chain runs to 337 residues: Casein kinase I isoform alpha-like (337 aa).

Residue Lys8 is modified to N6-acetyllysine. A Protein kinase domain is found at 17–285; the sequence is YKLVRKIGSG…YLRQLFRILF (269 aa). ATP-binding positions include 23–31 and Lys46; that span reads IGSGSFGDV. Catalysis depends on Asp136, which acts as the Proton acceptor. Residues 309–325 are compositionally biased toward low complexity; sequence AASSSGQGQQAQTQTGK. The tract at residues 309 to 337 is disordered; that stretch reads AASSSGQGQQAQTQTGKQTEKNKNNVKDN. Positions 326 to 337 are enriched in basic and acidic residues; that stretch reads QTEKNKNNVKDN.

The protein belongs to the protein kinase superfamily. CK1 Ser/Thr protein kinase family. Casein kinase I subfamily. As to quaternary structure, interacts with FAM83A, FAM83B, FAM83C, FAM83D, FAM83E, FAM83F, FAM83G and FAM83H (via DUF1669).

It localises to the cytoplasm. The catalysed reaction is L-seryl-[protein] + ATP = O-phospho-L-seryl-[protein] + ADP + H(+). The enzyme catalyses L-threonyl-[protein] + ATP = O-phospho-L-threonyl-[protein] + ADP + H(+). Its function is as follows. Casein kinases are operationally defined by their preferential utilization of acidic proteins such as caseins as substrates. It can phosphorylate a large number of proteins. Participates in Wnt signaling. The polypeptide is Casein kinase I isoform alpha-like (CSNK1A1L) (Homo sapiens (Human)).